A 212-amino-acid chain; its full sequence is Imidazole glycerol phosphate synthase subunit HisH (212 aa).

The 210-residue stretch at 3-212 (DIAIVDYGMG…LGNFVRWKPV (210 aa)) folds into the Glutamine amidotransferase type-1 domain. C82 (nucleophile) is an active-site residue. Residues H191 and E193 contribute to the active site.

Heterodimer of HisH and HisF.

The protein localises to the cytoplasm. It catalyses the reaction 5-[(5-phospho-1-deoxy-D-ribulos-1-ylimino)methylamino]-1-(5-phospho-beta-D-ribosyl)imidazole-4-carboxamide + L-glutamine = D-erythro-1-(imidazol-4-yl)glycerol 3-phosphate + 5-amino-1-(5-phospho-beta-D-ribosyl)imidazole-4-carboxamide + L-glutamate + H(+). The enzyme catalyses L-glutamine + H2O = L-glutamate + NH4(+). It participates in amino-acid biosynthesis; L-histidine biosynthesis; L-histidine from 5-phospho-alpha-D-ribose 1-diphosphate: step 5/9. In terms of biological role, IGPS catalyzes the conversion of PRFAR and glutamine to IGP, AICAR and glutamate. The HisH subunit catalyzes the hydrolysis of glutamine to glutamate and ammonia as part of the synthesis of IGP and AICAR. The resulting ammonia molecule is channeled to the active site of HisF. The chain is Imidazole glycerol phosphate synthase subunit HisH from Nitrosospira multiformis (strain ATCC 25196 / NCIMB 11849 / C 71).